Consider the following 350-residue polypeptide: Histidinol-phosphate aminotransferase (350 aa).

Lys-212 bears the N6-(pyridoxal phosphate)lysine mark.

Belongs to the class-II pyridoxal-phosphate-dependent aminotransferase family. Histidinol-phosphate aminotransferase subfamily. In terms of assembly, homodimer. Pyridoxal 5'-phosphate serves as cofactor.

It carries out the reaction L-histidinol phosphate + 2-oxoglutarate = 3-(imidazol-4-yl)-2-oxopropyl phosphate + L-glutamate. The protein operates within amino-acid biosynthesis; L-histidine biosynthesis; L-histidine from 5-phospho-alpha-D-ribose 1-diphosphate: step 7/9. The sequence is that of Histidinol-phosphate aminotransferase from Geobacter sulfurreducens (strain ATCC 51573 / DSM 12127 / PCA).